The chain runs to 667 residues: Endogenous retrovirus group K member 5 Gag polyprotein (667 aa).

Gly2 is lipidated: N-myristoyl glycine. Residues 166–188 form a disordered region; sequence KGPELVGPSESKPRGPSPLPAGQ. 2 consecutive CCHC-type zinc fingers follow at residues 543 to 560 and 580 to 597; these read KKCY…SCPV and GLCP…QCHS. The tract at residues 598-667 is disordered; sequence KFDKDGQPLS…CPAPQQAAPQ (70 aa). Residues 648-667 show a composition bias toward polar residues; sequence GVSQLQQSNSCPAPQQAAPQ.

The protein belongs to the beta type-B retroviral Gag protein family. HERV class-II K(HML-2) gag subfamily. Myristoylation is essential for retroviral assembly. Alteration of the glycine residue leads to a block in the budding of particles and an accumulation of Gag inside the cell. In terms of processing, specific enzymatic cleavages may yield mature proteins.

It is found in the cell membrane. The products of the Gag polyproteins of infectious retroviruses perform highly complex orchestrated tasks during the assembly, budding, maturation, and infection stages of the viral replication cycle. During viral assembly, the proteins form membrane associations and self-associations that ultimately result in budding of an immature virion from the infected cell. Gag precursors also function during viral assembly to selectively bind and package two plus strands of genomic RNA. Endogenous Gag proteins may have kept, lost or modified their original function during evolution. The chain is Endogenous retrovirus group K member 5 Gag polyprotein (ERVK-5) from Homo sapiens (Human).